A 364-amino-acid polypeptide reads, in one-letter code: Uroporphyrinogen decarboxylase (364 aa).

Residues 28 to 32 (RQAGR), Asp78, Tyr160, Thr215, and His333 contribute to the substrate site.

The protein belongs to the uroporphyrinogen decarboxylase family. In terms of assembly, homodimer.

It is found in the cytoplasm. The enzyme catalyses uroporphyrinogen III + 4 H(+) = coproporphyrinogen III + 4 CO2. Its pathway is porphyrin-containing compound metabolism; protoporphyrin-IX biosynthesis; coproporphyrinogen-III from 5-aminolevulinate: step 4/4. In terms of biological role, catalyzes the decarboxylation of four acetate groups of uroporphyrinogen-III to yield coproporphyrinogen-III. This chain is Uroporphyrinogen decarboxylase, found in Burkholderia mallei (strain NCTC 10247).